The following is a 397-amino-acid chain: Tryptophan synthase beta chain (397 aa).

Lys-87 is subject to N6-(pyridoxal phosphate)lysine.

Belongs to the TrpB family. In terms of assembly, tetramer of two alpha and two beta chains. Pyridoxal 5'-phosphate serves as cofactor.

It catalyses the reaction (1S,2R)-1-C-(indol-3-yl)glycerol 3-phosphate + L-serine = D-glyceraldehyde 3-phosphate + L-tryptophan + H2O. The protein operates within amino-acid biosynthesis; L-tryptophan biosynthesis; L-tryptophan from chorismate: step 5/5. Functionally, the beta subunit is responsible for the synthesis of L-tryptophan from indole and L-serine. This Escherichia coli O157:H7 protein is Tryptophan synthase beta chain.